The following is a 221-amino-acid chain: uncharacterized protein (221 aa).

The first 26 residues, 1–26, serve as a signal peptide directing secretion; that stretch reads MVRLVPRAFAATVALLAAGFSPATAS.

This is an uncharacterized protein from Mycobacterium tuberculosis (strain CDC 1551 / Oshkosh).